Here is a 383-residue protein sequence, read N- to C-terminus: ATP phosphoribosyltransferase regulatory subunit (383 aa).

The protein belongs to the class-II aminoacyl-tRNA synthetase family. HisZ subfamily. Heteromultimer composed of HisG and HisZ subunits.

Its subcellular location is the cytoplasm. It functions in the pathway amino-acid biosynthesis; L-histidine biosynthesis; L-histidine from 5-phospho-alpha-D-ribose 1-diphosphate: step 1/9. Its function is as follows. Required for the first step of histidine biosynthesis. May allow the feedback regulation of ATP phosphoribosyltransferase activity by histidine. This Janthinobacterium sp. (strain Marseille) (Minibacterium massiliensis) protein is ATP phosphoribosyltransferase regulatory subunit.